We begin with the raw amino-acid sequence, 336 residues long: Melanoma-associated antigen B17 (336 aa).

The segment covering 1-17 (MPRGQASKRRAREKRRQ) has biased composition (basic residues). Residues 1–108 (MPRGQASKRR…SSSESTGRDL (108 aa)) form a disordered region. Low complexity-rich tracts occupy residues 39–54 (PSSSSPACQSPPQSFP) and 62–80 (SQRASYPSSPASAVSLTSS). Polar residues predominate over residues 90–103 (ESPNSFHGPSSSES). Positions 109-336 (LNTKTGELVQ…RARASRSFQP (228 aa)) constitute an MAGE domain.

The chain is Melanoma-associated antigen B17 (MAGEB17) from Homo sapiens (Human).